Consider the following 180-residue polypeptide: Adenine phosphoribosyltransferase (180 aa).

Belongs to the purine/pyrimidine phosphoribosyltransferase family. As to quaternary structure, homodimer.

The protein localises to the cytoplasm. It catalyses the reaction AMP + diphosphate = 5-phospho-alpha-D-ribose 1-diphosphate + adenine. It participates in purine metabolism; AMP biosynthesis via salvage pathway; AMP from adenine: step 1/1. Its function is as follows. Catalyzes a salvage reaction resulting in the formation of AMP, that is energically less costly than de novo synthesis. This is Adenine phosphoribosyltransferase from Sinorhizobium medicae (strain WSM419) (Ensifer medicae).